The sequence spans 98 residues: NADH-ubiquinone oxidoreductase chain 4L (98 aa).

The next 3 membrane-spanning stretches (helical) occupy residues 1 to 21, 29 to 49, and 61 to 81; these read MSMV…GLLM, SLLC…LMIL, and IILL…LVMI.

The protein belongs to the complex I subunit 4L family. As to quaternary structure, core subunit of respiratory chain NADH dehydrogenase (Complex I) which is composed of 45 different subunits.

The protein resides in the mitochondrion inner membrane. It carries out the reaction a ubiquinone + NADH + 5 H(+)(in) = a ubiquinol + NAD(+) + 4 H(+)(out). Its function is as follows. Core subunit of the mitochondrial membrane respiratory chain NADH dehydrogenase (Complex I) which catalyzes electron transfer from NADH through the respiratory chain, using ubiquinone as an electron acceptor. Part of the enzyme membrane arm which is embedded in the lipid bilayer and involved in proton translocation. This Vicugna pacos (Alpaca) protein is NADH-ubiquinone oxidoreductase chain 4L (MT-ND4L).